The following is an 857-amino-acid chain: Phosphoenolpyruvate carboxylase (857 aa).

Active-site residues include histidine 144 and lysine 530.

This sequence belongs to the PEPCase type 1 family. In terms of assembly, homotetramer. The cofactor is Mg(2+). Post-translationally, the N-terminus is blocked.

The catalysed reaction is oxaloacetate + phosphate = phosphoenolpyruvate + hydrogencarbonate. Functionally, forms oxaloacetate, a four-carbon dicarboxylic acid source for the tricarboxylic acid cycle. The sequence is that of Phosphoenolpyruvate carboxylase (ppc) from Thermus sp. (strain 71).